The sequence spans 323 residues: Phospho-N-acetylmuramoyl-pentapeptide-transferase (323 aa).

Helical transmembrane passes span 5 to 25 (SAVLTILSSFLITFLLMPSLI), 57 to 77 (LLFIFSAVVTILWVAAWQGLI), 81 to 101 (LWALLFVLVVYGLIGMWDDSI), 118 to 138 (LCQVLAAMVFTVIYQHEGFQM), 140 to 160 (FGTTQIGWLYGLFIIFWIVGF), 173 to 193 (LVSGLSIISFAAYLIIALVNL), 196 to 216 (PGYPEIALFCLAMIGTLLGFF), 225 to 247 (IFMGDMGSLAIGASLAAVSLLLH), and 302 to 322 (IVFWLVGLVAAIIAVTTILLV).

The protein belongs to the glycosyltransferase 4 family. MraY subfamily. It depends on Mg(2+) as a cofactor.

It localises to the cell membrane. The enzyme catalyses UDP-N-acetyl-alpha-D-muramoyl-L-alanyl-gamma-D-glutamyl-L-lysyl-D-alanyl-D-alanine + di-trans,octa-cis-undecaprenyl phosphate = Mur2Ac(oyl-L-Ala-gamma-D-Glu-L-Lys-D-Ala-D-Ala)-di-trans,octa-cis-undecaprenyl diphosphate + UMP. The protein operates within cell wall biogenesis; peptidoglycan biosynthesis. Catalyzes the initial step of the lipid cycle reactions in the biosynthesis of the cell wall peptidoglycan: transfers peptidoglycan precursor phospho-MurNAc-pentapeptide from UDP-MurNAc-pentapeptide onto the lipid carrier undecaprenyl phosphate, yielding undecaprenyl-pyrophosphoryl-MurNAc-pentapeptide, known as lipid I. This chain is Phospho-N-acetylmuramoyl-pentapeptide-transferase, found in Limosilactobacillus reuteri (strain DSM 20016) (Lactobacillus reuteri).